Consider the following 120-residue polypeptide: U3-hexatoxin-Hi1a (120 aa).

Residues 1 to 19 (MKLLYFFVVITVLVAVAAA) form the signal peptide. The propeptide occupies 20–51 (LPAKTEEQIAAEENQLVEDLVQYAGTRLTRKR).

This sequence belongs to the neurotoxin 25 family. F7 subfamily. In terms of processing, contains 4 disulfide bonds. In terms of tissue distribution, expressed by the venom gland.

It is found in the secreted. Its function is as follows. Weak insecticidal toxin with probable ion channel impairing activity. In vivo, induces paralysis when injected into sheep blowflies (L.cuprina). Shows weak toxicity, since it is only toxic at high doses, and flies recover within 24 hours. This chain is U3-hexatoxin-Hi1a, found in Hadronyche infensa (Fraser island funnel-web spider).